A 389-amino-acid polypeptide reads, in one-letter code: Dual-specificity RNA methyltransferase RlmN (389 aa).

Catalysis depends on glutamate 110, which acts as the Proton acceptor. The region spanning 116 to 355 (EKDRATLCVS…TIVRKTRGDD (240 aa)) is the Radical SAM core domain. Cysteine 123 and cysteine 360 are joined by a disulfide. 3 residues coordinate [4Fe-4S] cluster: cysteine 130, cysteine 134, and cysteine 137. S-adenosyl-L-methionine contacts are provided by residues 184–185 (GE), serine 216, 238–240 (SLH), and asparagine 317. Catalysis depends on cysteine 360, which acts as the S-methylcysteine intermediate.

It belongs to the radical SAM superfamily. RlmN family. It depends on [4Fe-4S] cluster as a cofactor.

Its subcellular location is the cytoplasm. The enzyme catalyses adenosine(2503) in 23S rRNA + 2 reduced [2Fe-2S]-[ferredoxin] + 2 S-adenosyl-L-methionine = 2-methyladenosine(2503) in 23S rRNA + 5'-deoxyadenosine + L-methionine + 2 oxidized [2Fe-2S]-[ferredoxin] + S-adenosyl-L-homocysteine. The catalysed reaction is adenosine(37) in tRNA + 2 reduced [2Fe-2S]-[ferredoxin] + 2 S-adenosyl-L-methionine = 2-methyladenosine(37) in tRNA + 5'-deoxyadenosine + L-methionine + 2 oxidized [2Fe-2S]-[ferredoxin] + S-adenosyl-L-homocysteine. Functionally, specifically methylates position 2 of adenine 2503 in 23S rRNA and position 2 of adenine 37 in tRNAs. m2A2503 modification seems to play a crucial role in the proofreading step occurring at the peptidyl transferase center and thus would serve to optimize ribosomal fidelity. The protein is Dual-specificity RNA methyltransferase RlmN of Erwinia tasmaniensis (strain DSM 17950 / CFBP 7177 / CIP 109463 / NCPPB 4357 / Et1/99).